Reading from the N-terminus, the 215-residue chain is Uridine kinase (215 aa).

ATP is bound at residue G16–S23.

The protein belongs to the uridine kinase family.

Its subcellular location is the cytoplasm. The catalysed reaction is uridine + ATP = UMP + ADP + H(+). It carries out the reaction cytidine + ATP = CMP + ADP + H(+). It participates in pyrimidine metabolism; CTP biosynthesis via salvage pathway; CTP from cytidine: step 1/3. Its pathway is pyrimidine metabolism; UMP biosynthesis via salvage pathway; UMP from uridine: step 1/1. This is Uridine kinase from Aliivibrio fischeri (strain ATCC 700601 / ES114) (Vibrio fischeri).